Consider the following 322-residue polypeptide: Lipoyl synthase (322 aa).

Residues 1–24 (MVTVLDTVSKPRPRHPEKAHRPDQ) form a disordered region. The span at 14–24 (RHPEKAHRPDQ) shows a compositional bias: basic and acidic residues. C59, C64, C70, C85, C89, C92, and S298 together coordinate [4Fe-4S] cluster. The Radical SAM core domain occupies 71–287 (WDKKHATFMI…ETIAYTKGFL (217 aa)).

The protein belongs to the radical SAM superfamily. Lipoyl synthase family. Requires [4Fe-4S] cluster as cofactor.

The protein localises to the cytoplasm. The enzyme catalyses [[Fe-S] cluster scaffold protein carrying a second [4Fe-4S](2+) cluster] + N(6)-octanoyl-L-lysyl-[protein] + 2 oxidized [2Fe-2S]-[ferredoxin] + 2 S-adenosyl-L-methionine + 4 H(+) = [[Fe-S] cluster scaffold protein] + N(6)-[(R)-dihydrolipoyl]-L-lysyl-[protein] + 4 Fe(3+) + 2 hydrogen sulfide + 2 5'-deoxyadenosine + 2 L-methionine + 2 reduced [2Fe-2S]-[ferredoxin]. It functions in the pathway protein modification; protein lipoylation via endogenous pathway; protein N(6)-(lipoyl)lysine from octanoyl-[acyl-carrier-protein]: step 2/2. Catalyzes the radical-mediated insertion of two sulfur atoms into the C-6 and C-8 positions of the octanoyl moiety bound to the lipoyl domains of lipoate-dependent enzymes, thereby converting the octanoylated domains into lipoylated derivatives. This chain is Lipoyl synthase, found in Chelativorans sp. (strain BNC1).